A 535-amino-acid polypeptide reads, in one-letter code: Bifunctional purine biosynthesis protein PurH (535 aa).

Residues 6–151 (TRLPVRRALI…KNHKDVAIVV (146 aa)) form the MGS-like domain.

Belongs to the PurH family.

It catalyses the reaction (6R)-10-formyltetrahydrofolate + 5-amino-1-(5-phospho-beta-D-ribosyl)imidazole-4-carboxamide = 5-formamido-1-(5-phospho-D-ribosyl)imidazole-4-carboxamide + (6S)-5,6,7,8-tetrahydrofolate. The catalysed reaction is IMP + H2O = 5-formamido-1-(5-phospho-D-ribosyl)imidazole-4-carboxamide. The protein operates within purine metabolism; IMP biosynthesis via de novo pathway; 5-formamido-1-(5-phospho-D-ribosyl)imidazole-4-carboxamide from 5-amino-1-(5-phospho-D-ribosyl)imidazole-4-carboxamide (10-formyl THF route): step 1/1. It participates in purine metabolism; IMP biosynthesis via de novo pathway; IMP from 5-formamido-1-(5-phospho-D-ribosyl)imidazole-4-carboxamide: step 1/1. The sequence is that of Bifunctional purine biosynthesis protein PurH from Ectopseudomonas mendocina (strain ymp) (Pseudomonas mendocina).